Here is a 390-residue protein sequence, read N- to C-terminus: S-adenosylmethionine synthase 4 (390 aa).

Glu-9 serves as a coordination point for Mg(2+). His-15 lines the ATP pocket. Glu-43 contacts K(+). L-methionine is bound by residues Glu-56 and Gln-99. ATP is bound by residues 167-169 (DGK), 235-238 (SGRF), Asp-246, 252-253 (RK), Ala-269, Lys-273, and Lys-277. L-methionine is bound at residue Asp-246. Lys-277 contacts L-methionine.

Belongs to the AdoMet synthase family. As to quaternary structure, homotetramer. Mn(2+) serves as cofactor. Requires Mg(2+) as cofactor. It depends on Co(2+) as a cofactor. K(+) is required as a cofactor.

It is found in the cytoplasm. It catalyses the reaction L-methionine + ATP + H2O = S-adenosyl-L-methionine + phosphate + diphosphate. Its pathway is amino-acid biosynthesis; S-adenosyl-L-methionine biosynthesis; S-adenosyl-L-methionine from L-methionine: step 1/1. Functionally, catalyzes the formation of S-adenosylmethionine from methionine and ATP. The reaction comprises two steps that are both catalyzed by the same enzyme: formation of S-adenosylmethionine (AdoMet) and triphosphate, and subsequent hydrolysis of the triphosphate. The sequence is that of S-adenosylmethionine synthase 4 (METK4) from Populus trichocarpa (Western balsam poplar).